Consider the following 58-residue polypeptide: Metallothionein (58 aa).

The segment at 1–29 (MPGPCCNDVCECAAGGCKTGCVCTSCRCS) is beta. 18 residues coordinate a divalent metal cation: Cys5, Cys6, Cys10, Cys12, Cys17, Cys21, Cys23, Cys26, Cys28, Cys31, Cys34, Cys38, Cys40, Cys46, Cys50, Cys54, Cys56, and Cys57. Residues 30–58 (PCDKCTSGCKCPSKEECAKTCSKPCECCP) form an alpha region.

Functionally, metallothioneins have a high content of cysteine residues that bind various heavy metals. Class I MTS in crustacea are involved in the sequestration of elevated levels of heavy-metal ions. The polypeptide is Metallothionein (Astacus astacus (Noble crayfish)).